A 161-amino-acid polypeptide reads, in one-letter code: Bacterioferritin (161 aa).

The Ferritin-like diiron domain occupies 1 to 145 (MKGDAKVIEF…TQISLYDRLG (145 aa)). Fe cation contacts are provided by glutamate 18 and glutamate 51. Methionine 52 is a binding site for heme b. The Fe cation site is built by histidine 54, glutamate 94, glutamate 127, and histidine 130.

The protein belongs to the bacterioferritin family. As to quaternary structure, homooligomer of 24 subunits, arranged as 12 dimers, that are packed together to form an approximately spherical molecule with a central cavity, in which large amounts of iron can be deposited. Requires heme b as cofactor.

It catalyses the reaction 4 Fe(2+) + O2 + 4 H(+) = 4 Fe(3+) + 2 H2O. The enzyme catalyses Fe(2+)(in) = Fe(2+)(out). In terms of biological role, iron-storage protein, whose ferroxidase center binds Fe(2+), oxidizes it using dioxygen to Fe(3+), and participates in the subsequent Fe(3+) oxide mineral core formation within the central cavity of the BFR protein shell. The polypeptide is Bacterioferritin (bfr) (Rhodobacter capsulatus (Rhodopseudomonas capsulata)).